A 90-amino-acid chain; its full sequence is Conotoxin Ca8.2 (90 aa).

The first 21 residues, 1–21, serve as a signal peptide directing secretion; the sequence is MMLKMGAMFVLLLLFILPSSQ. A propeptide spanning residues 22-46 is cleaved from the precursor; sequence QEGDVQARKTHLKRGFYGTLAMSTR. Position 89 is a glutamine amide (Gln89).

This sequence belongs to the conotoxin S superfamily. Post-translationally, contains 5 disulfide bonds. In terms of tissue distribution, expressed by the venom duct.

It is found in the secreted. The sequence is that of Conotoxin Ca8.2 from Conus caracteristicus (Characteristic cone).